The chain runs to 464 residues: tRNA modification GTPase MnmE (464 aa).

(6S)-5-formyl-5,6,7,8-tetrahydrofolate contacts are provided by arginine 25, glutamate 87, and lysine 130. The TrmE-type G domain maps to 226 to 386; the sequence is GLSVVLAGQP…LRAELLRIAG (161 aa). Asparagine 236 is a binding site for K(+). GTP-binding positions include 236–241, 255–261, and 280–283; these read NVGKSS, TPIAGTT, and DTAG. Serine 240 provides a ligand contact to Mg(2+). K(+) is bound by residues threonine 255, isoleucine 257, and threonine 260. Residue threonine 261 participates in Mg(2+) binding. (6S)-5-formyl-5,6,7,8-tetrahydrofolate is bound at residue lysine 464.

It belongs to the TRAFAC class TrmE-Era-EngA-EngB-Septin-like GTPase superfamily. TrmE GTPase family. In terms of assembly, homodimer. Heterotetramer of two MnmE and two MnmG subunits. K(+) serves as cofactor.

The protein localises to the cytoplasm. Exhibits a very high intrinsic GTPase hydrolysis rate. Involved in the addition of a carboxymethylaminomethyl (cmnm) group at the wobble position (U34) of certain tRNAs, forming tRNA-cmnm(5)s(2)U34. In Burkholderia ambifaria (strain ATCC BAA-244 / DSM 16087 / CCUG 44356 / LMG 19182 / AMMD) (Burkholderia cepacia (strain AMMD)), this protein is tRNA modification GTPase MnmE.